The chain runs to 102 residues: Small ribosomal subunit protein uS10 (102 aa).

This sequence belongs to the universal ribosomal protein uS10 family. As to quaternary structure, part of the 30S ribosomal subunit.

Involved in the binding of tRNA to the ribosomes. The protein is Small ribosomal subunit protein uS10 of Gluconobacter oxydans (strain 621H) (Gluconobacter suboxydans).